The following is a 429-amino-acid chain: Ribosomal RNA small subunit methyltransferase B (429 aa).

S-adenosyl-L-methionine-binding positions include 254–260, Asp277, Asp303, and Asp322; that span reads CAAPGGK. The Nucleophile role is filled by Cys375.

It belongs to the class I-like SAM-binding methyltransferase superfamily. RsmB/NOP family.

Its subcellular location is the cytoplasm. It catalyses the reaction cytidine(967) in 16S rRNA + S-adenosyl-L-methionine = 5-methylcytidine(967) in 16S rRNA + S-adenosyl-L-homocysteine + H(+). Functionally, specifically methylates the cytosine at position 967 (m5C967) of 16S rRNA. In Escherichia coli (strain UTI89 / UPEC), this protein is Ribosomal RNA small subunit methyltransferase B.